Here is a 352-residue protein sequence, read N- to C-terminus: Macrophage-capping protein (352 aa).

Methionine 1 carries the post-translational modification N-acetylmethionine. Residues 27 to 75 (EKLKPVPIARESHGIFFSGDSYLVLHNGPEEASHLHLWIGQQSSRDEQG) form a Gelsolin-like 1 repeat. Positions 139–148 (RKLYQVKGKK) match the Nuclear localization signal motif. Gelsolin-like repeat units lie at residues 150 to 190 (IRAT…LERN) and 265 to 311 (MNLT…KERQ). Serine 341 is subject to Phosphoserine.

Belongs to the villin/gelsolin family. As to quaternary structure, interacts with NUP62. Interacts with NUTF2 and RAN; involved in CAPG nuclear import. Phosphorylated. Nuclear GCAP39 is more highly phosphorylated than cytoplasmic GCAP39. As to expression, present in a large variety of tissues and is particularly abundant in kidney and lung. Highly expressed in macrophages (at protein level).

It is found in the nucleus. The protein resides in the cytoplasm. Its subcellular location is the melanosome. It localises to the cell projection. The protein localises to the lamellipodium. It is found in the ruffle. Functionally, calcium-sensitive protein which reversibly blocks the barbed ends of actin filaments but does not sever preformed actin filaments. May play an important role in macrophage function. May play a role in regulating cytoplasmic and/or nuclear structures through potential interactions with actin. May bind DNA. Uncapping occurs either when Ca(2+) falls or when the concentration of polyphosphoinositide rises, both at low and high Ca(2+). The sequence is that of Macrophage-capping protein (Capg) from Mus musculus (Mouse).